Consider the following 992-residue polypeptide: UvrABC system protein A (992 aa).

Residues 1-11 (MPKNSSTTVSS) are compositionally biased toward polar residues. A disordered region spans residues 1–30 (MPKNSSTTVSSAVEAHAGGLASGPGGARSG). 62 to 69 (GLSGSGKS) is a binding site for ATP. The C4-type; atypical zinc-finger motif lies at 302-330 (CPNGHEQTVDEIEPRSFSFNNPFGACPEC). ABC transporter domains are found at residues 360–639 (WSLG…TRSV) and 659–988 (PEKG…RFLA). An ATP-binding site is contributed by 692–699 (GVSGSGKS). The segment at 791–817 (CEACAGDGTLKIEMNFLPDVYVPCEVC) adopts a C4-type zinc-finger fold.

The protein belongs to the ABC transporter superfamily. UvrA family. Forms a heterotetramer with UvrB during the search for lesions.

The protein resides in the cytoplasm. In terms of biological role, the UvrABC repair system catalyzes the recognition and processing of DNA lesions. UvrA is an ATPase and a DNA-binding protein. A damage recognition complex composed of 2 UvrA and 2 UvrB subunits scans DNA for abnormalities. When the presence of a lesion has been verified by UvrB, the UvrA molecules dissociate. This is UvrABC system protein A from Micrococcus luteus (Micrococcus lysodeikticus).